The chain runs to 352 residues: Quinolinate synthase (352 aa).

Iminosuccinate contacts are provided by His48 and Ser69. Cys114 contributes to the [4Fe-4S] cluster binding site. Iminosuccinate contacts are provided by residues 140-142 (YAN) and Ser157. Residue Cys201 coordinates [4Fe-4S] cluster. Iminosuccinate contacts are provided by residues 227 to 229 (HPE) and Thr244. Cys298 provides a ligand contact to [4Fe-4S] cluster.

The protein belongs to the quinolinate synthase family. Type 1 subfamily. [4Fe-4S] cluster serves as cofactor.

It is found in the cytoplasm. The enzyme catalyses iminosuccinate + dihydroxyacetone phosphate = quinolinate + phosphate + 2 H2O + H(+). It participates in cofactor biosynthesis; NAD(+) biosynthesis; quinolinate from iminoaspartate: step 1/1. Catalyzes the condensation of iminoaspartate with dihydroxyacetone phosphate to form quinolinate. The sequence is that of Quinolinate synthase from Pseudomonas entomophila (strain L48).